The chain runs to 138 residues: D-ribose pyranase (138 aa).

H20 (proton donor) is an active-site residue. Substrate is bound by residues D28, H105, and 127-129; that span reads YAN.

Belongs to the RbsD / FucU family. RbsD subfamily. As to quaternary structure, homodecamer.

Its subcellular location is the cytoplasm. The enzyme catalyses beta-D-ribopyranose = beta-D-ribofuranose. Its pathway is carbohydrate metabolism; D-ribose degradation; D-ribose 5-phosphate from beta-D-ribopyranose: step 1/2. In terms of biological role, catalyzes the interconversion of beta-pyran and beta-furan forms of D-ribose. In Psychromonas ingrahamii (strain DSM 17664 / CCUG 51855 / 37), this protein is D-ribose pyranase.